Here is a 205-residue protein sequence, read N- to C-terminus: MQWQTKLPLIAILRGITPDEALAHVGAVIDAGFDAVEIPLNSPQWEQSIPAIVDAYGDKALIGAGTVLKPEQVDALARMGCQLIVTPNIHSEVIRRAVGYGMTVCPGCATATEAFTALEAGAQALKIFPSSAFGPQYIKALKAVLPSDIAVFAVGGVTPENLAQWIDAGCAGAGLGSDLYRAGQSVERTAQQAAAFVKAYREAVQ.

2-dehydro-3-deoxy-6-phospho-D-galactonate is bound at residue R14. The Proton donor/acceptor role is filled by E37. 2-dehydro-3-deoxy-6-phospho-D-galactonate is bound by residues T66, K126, G156, G176, and S177. Catalysis depends on K126, which acts as the Schiff-base intermediate with substrate.

Belongs to the KHG/KDPG aldolase family. As to quaternary structure, homotrimer.

It carries out the reaction 2-dehydro-3-deoxy-6-phospho-D-galactonate = D-glyceraldehyde 3-phosphate + pyruvate. The protein operates within carbohydrate acid metabolism; D-galactonate degradation; D-glyceraldehyde 3-phosphate and pyruvate from D-galactonate: step 3/3. In terms of biological role, involved in the degradation of galactose via the DeLey-Doudoroff pathway. Catalyzes the reversible, stereospecific retro-aldol cleavage of 2-keto-3-deoxy-6-phosphogalactonate (KDPGal) to pyruvate and D-glyceraldehyde-3-phosphate. In the synthetic direction, it catalyzes the addition of pyruvate to electrophilic aldehydes with re-facial selectivity. It can use a limited number of aldehyde substrates, including D-glyceraldehyde-3-phosphate (natural substrate), D-glyceraldehyde, glycolaldehyde, 2-pyridinecarboxaldehyde, D-ribose, D-erythrose and D-threose. It efficiently catalyzes aldol addition only using pyruvate as the nucleophilic component and accepts both stereochemical configurations at C2 of the electrophile. The polypeptide is 2-dehydro-3-deoxy-6-phosphogalactonate aldolase (dgoA) (Escherichia coli (strain K12)).